Consider the following 859-residue polypeptide: Sulfate permease 1 (859 aa).

N-linked (GlcNAc...) asparagine glycosylation is found at asparagine 51 and asparagine 93. The next 8 helical transmembrane spans lie at 94–114 (LTAK…KWFP), 116–136 (YNFT…CVLV), 148–168 (LSPE…SLFA), 173–193 (VCIG…AEVL), 206–226 (PIIA…LGIL), 234–254 (LISL…IIWG), 292–312 (FGLI…TFGI), and 332–352 (FYFY…TAIS). N-linked (GlcNAc...) asparagine glycans are attached at residues asparagine 358 and asparagine 391. 4 helical membrane passes run 395–415 (EIPA…KSFG), 428–448 (LIAI…PATG), 468–488 (VFTG…FFFI), and 525–545 (FIVT…YFAM). Residues asparagine 630, asparagine 653, and asparagine 718 are each glycosylated (N-linked (GlcNAc...) asparagine). In terms of domain architecture, STAS spans 630-808 (NTTVRPPPPG…SIIAGHSSFH (179 aa)).

This sequence belongs to the SLC26A/SulP transporter (TC 2.A.53) family.

It localises to the membrane. Its function is as follows. High affinity uptake of sulfate into the cell. This chain is Sulfate permease 1 (SUL1), found in Saccharomyces cerevisiae (strain ATCC 204508 / S288c) (Baker's yeast).